We begin with the raw amino-acid sequence, 1388 residues long: DNA-directed RNA polymerase subunit beta'' (1388 aa).

Zn(2+) is bound by residues Cys224, Cys294, Cys301, and Cys304.

This sequence belongs to the RNA polymerase beta' chain family. RpoC2 subfamily. In terms of assembly, in plastids the minimal PEP RNA polymerase catalytic core is composed of four subunits: alpha, beta, beta', and beta''. When a (nuclear-encoded) sigma factor is associated with the core the holoenzyme is formed, which can initiate transcription. Zn(2+) serves as cofactor.

It localises to the plastid. The protein resides in the chloroplast. It carries out the reaction RNA(n) + a ribonucleoside 5'-triphosphate = RNA(n+1) + diphosphate. Functionally, DNA-dependent RNA polymerase catalyzes the transcription of DNA into RNA using the four ribonucleoside triphosphates as substrates. This is DNA-directed RNA polymerase subunit beta'' from Phalaenopsis aphrodite subsp. formosana (Moth orchid).